Reading from the N-terminus, the 106-residue chain is U1-lycotoxin-Ls1z (106 aa).

The first 19 residues, 1–19 (MKVLVVVALLVTLISYSSS), serve as a signal peptide directing secretion. A propeptide spanning residues 20-40 (EGIDDLEADELLSLMANEQTR) is cleaved from the precursor. Disulfide bonds link Cys-43–Cys-58, Cys-50–Cys-67, Cys-57–Cys-85, and Cys-69–Cys-83.

This sequence belongs to the neurotoxin 19 (CSTX) family. 03 subfamily. As to expression, expressed by the venom gland.

It localises to the secreted. This is U1-lycotoxin-Ls1z from Lycosa singoriensis (Wolf spider).